We begin with the raw amino-acid sequence, 677 residues long: MTQVAKKILVTCALPYANGSIHLGHMLEHIQADVWVRYQRMRGHEVNFICADDAHGTPIMLKAQQLGITPEQMIGEMSQEHQTDFAGFNISYDNYHSTHSDENRELSELIYTRLKENGFIKNRTISQLYDPEKGMFLPDRFVKGTCPKCKSADQYGDNCEVCGATYSPTELIEPKSVVSGATPVMRDSEHFFFDLPSFSEMLQAWTRSGALQEQVANKMQEWFESGLQQWDISRDAPYFGFEIPNAPGKYFYVWLDAPIGYMGSFKNLCDKRGDTTSFDEYWKKDSDAELYHFIGKDIVYFHSLFWPAMLEGSHFRKPTNLFVHGYVTVNGAKMSKSRGTFIKASTWLKHFDADSLRYYYTAKLSSRIDDIDLNLEDFVQRVNADIVNKVVNLASRNAGFINKRFDGVLAAELADPQLYKTFTDAAAVIGEAWESREFGKAIREIMALADVANRYVDEQAPWVVAKQEGRDADLQAICSMGINLFRVLMTYLKPVLPTLSERVEAFLNSELNWDAIEQPLLSHKVNTFKALYNRIDMKQVEALVEASKEEVKAAAAPVTGPLADFPIQETITFDDFAKIDLRVALIENAEFVDGSDKLLRLTLDLGGEKRNVFSGIRSAYPDPQALIGRQTVMVANLAPRKMRFGVSEGMVMAAGPGGKDIFLLSPDDGAKPGQQVK.

Positions 15 to 25 (PYANGSIHLGH) match the 'HIGH' region motif. Positions 146, 149, 159, and 162 each coordinate Zn(2+). Residues 333 to 337 (KMSKS) carry the 'KMSKS' region motif. Lys336 provides a ligand contact to ATP. Residues 575–677 (DFAKIDLRVA…DGAKPGQQVK (103 aa)) enclose the tRNA-binding domain.

Belongs to the class-I aminoacyl-tRNA synthetase family. MetG type 1 subfamily. Homodimer. It depends on Zn(2+) as a cofactor.

The protein localises to the cytoplasm. The enzyme catalyses tRNA(Met) + L-methionine + ATP = L-methionyl-tRNA(Met) + AMP + diphosphate. Its function is as follows. Is required not only for elongation of protein synthesis but also for the initiation of all mRNA translation through initiator tRNA(fMet) aminoacylation. This is Methionine--tRNA ligase from Salmonella typhi.